The primary structure comprises 454 residues: MELSFKREKICSVEVNLDVPSIEVHSHNLPSYIPGYNGFFMTVEYCDGLVVYATENGIGICNPLLRQIRWIKSKVNYRYNGVGYDNSRPENHYKIFESCPYSDTTVKASITEFVSDAWISKPYEFAYDWDFMSSYSVSLNGALYWVAFHMASDDQFIQSFDFSTEKFEPYCLLPNKKCDPSNARSLAVFRGDRFSYLEQNYETRNIEIWVTKKEIKIENGKAVEWMNLMKVSVPKWSSLREKACIYIAKGDKFHEIIINDLVEYPTRHHRTYVPSLVPVPTFTMSNRSKTQQVESRFTPPRGIQASDGGNEWDDGIFHNVKKINVGVNDFDTVFVKFHYSKYNRIEAGAGHGNATTHNPDDEIMIAGGDYIEAVEGTYTESHITSITFRMRKGDMMPQYGRLNGTPFSLRGERGSKAIGFYGRSSGVHLTALGVHFSPPPLYYSFPNHSPVFNY.

The Jacalin-type lectin domain occupies 295–438 (SRFTPPRGIQ…LTALGVHFSP (144 aa)).

The protein belongs to the jacalin lectin family.

The sequence is that of Jacalin-related lectin 37 (JAL37) from Arabidopsis thaliana (Mouse-ear cress).